The sequence spans 479 residues: Glutamate--tRNA ligase (479 aa).

The 'HIGH' region signature appears at 21–31 (PSPTGYLHVGG). Positions 248 to 252 (KLSKR) match the 'KMSKS' region motif. K251 serves as a coordination point for ATP.

Belongs to the class-I aminoacyl-tRNA synthetase family. Glutamate--tRNA ligase type 1 subfamily. In terms of assembly, monomer.

The protein resides in the cytoplasm. It carries out the reaction tRNA(Glu) + L-glutamate + ATP = L-glutamyl-tRNA(Glu) + AMP + diphosphate. Functionally, catalyzes the attachment of glutamate to tRNA(Glu) in a two-step reaction: glutamate is first activated by ATP to form Glu-AMP and then transferred to the acceptor end of tRNA(Glu). The chain is Glutamate--tRNA ligase from Haemophilus ducreyi (strain 35000HP / ATCC 700724).